We begin with the raw amino-acid sequence, 486 residues long: MKVVFVSYEVFPFAKVGGLADVAGTLPKYLKKHGVDVTIVMPKHRIVEKNAEKFGYEIKKVAESLSVSHVKTDQKFDIYESVLPGSDVKTYFVANDYYFSAEDVYAGPDLGEQAIFFCAATLDLVKHLDLKPDIVHVNDWQTALIPVYLKTVYRDDPYFSRTATVLTIHNLGYQGVFDPKYLSFAGLPDYVYTIDGLEFYGQLNFLKGGIVFSDVINTVSPTYAEEIQTEEYGEKLDGVLRMRSKDLYGILNGIDYELYNPATDRYIYVNYDVNRLELKWENKVKLQEELGLPVNKETAVAGLISRLVPQKGLDLLVDVMDYLTLFDLQIVVLGTGDEQYENAFRKFQERYPDKVSANIKFDVELAQKIYAGADIFLMPSRYEPCGLGQMFSMRYGTIPVVRYTGGLADTVKEYDPQSMEGTGFGFKKYDSAHLLKAVSKALHFYYREKDHWRRIMTNAMNTDLSWDRSAKEYVDLYKKALAKVGR.

Lysine 15 provides a ligand contact to ADP-alpha-D-glucose.

It belongs to the glycosyltransferase 1 family. Bacterial/plant glycogen synthase subfamily.

It catalyses the reaction [(1-&gt;4)-alpha-D-glucosyl](n) + ADP-alpha-D-glucose = [(1-&gt;4)-alpha-D-glucosyl](n+1) + ADP + H(+). It participates in glycan biosynthesis; glycogen biosynthesis. Functionally, synthesizes alpha-1,4-glucan chains using ADP-glucose. The protein is Glycogen synthase of Thermotoga maritima (strain ATCC 43589 / DSM 3109 / JCM 10099 / NBRC 100826 / MSB8).